A 170-amino-acid chain; its full sequence is MDEVLIGEVIKPHGVQGEIKVYPITDNPKRFRKLKEVILVQNQEQRRLKVLHANVHQSEVYLTLEGINTRDKAEAIRGWAVKADRDQVPPLKEGWYYFELEGMQVYEGDVLLGTLAQVIQTGANDVYLVKGDKGEICVPALKTVVKHVDVAGKRMDVELPPGLIDGEELR.

Residues 92 to 163 enclose the PRC barrel domain; the sequence is KEGWYYFELE…RMDVELPPGL (72 aa).

It belongs to the RimM family. In terms of assembly, binds ribosomal protein uS19.

Its subcellular location is the cytoplasm. In terms of biological role, an accessory protein needed during the final step in the assembly of 30S ribosomal subunit, possibly for assembly of the head region. Essential for efficient processing of 16S rRNA. May be needed both before and after RbfA during the maturation of 16S rRNA. It has affinity for free ribosomal 30S subunits but not for 70S ribosomes. This is Ribosome maturation factor RimM from Desulfitobacterium hafniense (strain Y51).